A 376-amino-acid chain; its full sequence is Lipid-A-disaccharide synthase (376 aa).

It belongs to the LpxB family.

It carries out the reaction a lipid X + a UDP-2-N,3-O-bis[(3R)-3-hydroxyacyl]-alpha-D-glucosamine = a lipid A disaccharide + UDP + H(+). It functions in the pathway bacterial outer membrane biogenesis; LPS lipid A biosynthesis. Condensation of UDP-2,3-diacylglucosamine and 2,3-diacylglucosamine-1-phosphate to form lipid A disaccharide, a precursor of lipid A, a phosphorylated glycolipid that anchors the lipopolysaccharide to the outer membrane of the cell. In Coxiella burnetii (strain RSA 331 / Henzerling II), this protein is Lipid-A-disaccharide synthase.